We begin with the raw amino-acid sequence, 365 residues long: Histidinol-phosphate aminotransferase (365 aa).

The tract at residues 1-22 (MSRPVPNPGILDIAPYTPGKSP) is disordered. Lysine 221 carries the post-translational modification N6-(pyridoxal phosphate)lysine.

The protein belongs to the class-II pyridoxal-phosphate-dependent aminotransferase family. Histidinol-phosphate aminotransferase subfamily. In terms of assembly, homodimer. Pyridoxal 5'-phosphate serves as cofactor.

The enzyme catalyses L-histidinol phosphate + 2-oxoglutarate = 3-(imidazol-4-yl)-2-oxopropyl phosphate + L-glutamate. The protein operates within amino-acid biosynthesis; L-histidine biosynthesis; L-histidine from 5-phospho-alpha-D-ribose 1-diphosphate: step 7/9. This Nitrobacter winogradskyi (strain ATCC 25391 / DSM 10237 / CIP 104748 / NCIMB 11846 / Nb-255) protein is Histidinol-phosphate aminotransferase.